A 244-amino-acid chain; its full sequence is 1-(5-phosphoribosyl)-5-[(5-phosphoribosylamino)methylideneamino] imidazole-4-carboxamide isomerase (244 aa).

Catalysis depends on D11, which acts as the Proton acceptor. The Proton donor role is filled by D132.

This sequence belongs to the HisA/HisF family.

It is found in the cytoplasm. The enzyme catalyses 1-(5-phospho-beta-D-ribosyl)-5-[(5-phospho-beta-D-ribosylamino)methylideneamino]imidazole-4-carboxamide = 5-[(5-phospho-1-deoxy-D-ribulos-1-ylimino)methylamino]-1-(5-phospho-beta-D-ribosyl)imidazole-4-carboxamide. It participates in amino-acid biosynthesis; L-histidine biosynthesis; L-histidine from 5-phospho-alpha-D-ribose 1-diphosphate: step 4/9. The chain is 1-(5-phosphoribosyl)-5-[(5-phosphoribosylamino)methylideneamino] imidazole-4-carboxamide isomerase from Sphingopyxis alaskensis (strain DSM 13593 / LMG 18877 / RB2256) (Sphingomonas alaskensis).